Here is a 214-residue protein sequence, read N- to C-terminus: Thymidylate kinase (214 aa).

Residue 9–16 participates in ATP binding; sequence GVDGSGKS.

This sequence belongs to the thymidylate kinase family.

It catalyses the reaction dTMP + ATP = dTDP + ADP. Functionally, phosphorylation of dTMP to form dTDP in both de novo and salvage pathways of dTTP synthesis. This chain is Thymidylate kinase, found in Symbiobacterium thermophilum (strain DSM 24528 / JCM 14929 / IAM 14863 / T).